A 49-amino-acid polypeptide reads, in one-letter code: Small ribosomal subunit protein eS31 (49 aa).

Zn(2+) contacts are provided by Cys-21, Cys-24, Cys-39, and Cys-42. The segment at 21 to 42 (CPRCGPGTFLADHKNRLTCGKC) adopts a C4-type zinc-finger fold.

Belongs to the eukaryotic ribosomal protein eS31 family. Part of the 30S ribosomal subunit. The cofactor is Zn(2+).

In Methanosarcina barkeri (strain Fusaro / DSM 804), this protein is Small ribosomal subunit protein eS31.